The sequence spans 122 residues: Small ribosomal subunit protein uS13 (122 aa).

Residues 98 to 122 (VRGQRTHTNARTRKGPAKAIAGKKK) form a disordered region.

The protein belongs to the universal ribosomal protein uS13 family. Part of the 30S ribosomal subunit. Forms a loose heterodimer with protein S19. Forms two bridges to the 50S subunit in the 70S ribosome.

Functionally, located at the top of the head of the 30S subunit, it contacts several helices of the 16S rRNA. In the 70S ribosome it contacts the 23S rRNA (bridge B1a) and protein L5 of the 50S subunit (bridge B1b), connecting the 2 subunits; these bridges are implicated in subunit movement. Contacts the tRNAs in the A and P-sites. This Roseobacter denitrificans (strain ATCC 33942 / OCh 114) (Erythrobacter sp. (strain OCh 114)) protein is Small ribosomal subunit protein uS13.